The chain runs to 599 residues: Adenine deaminase (599 aa).

This sequence belongs to the metallo-dependent hydrolases superfamily. Adenine deaminase family. The cofactor is Mn(2+).

It carries out the reaction adenine + H2O + H(+) = hypoxanthine + NH4(+). This chain is Adenine deaminase, found in Clostridium botulinum (strain 657 / Type Ba4).